The chain runs to 479 residues: Phosphoglycerate kinase, glycosomal (479 aa).

12 residues coordinate (2R)-3-phosphoglycerate: Val23, Asp24, Phe25, Asn26, Arg39, Ser61, His62, Gly64, Arg65, Arg132, His168, and Arg169. ADP is bound by residues Gly214 and Ala215. Gly214 contacts CDP. AMP contacts are provided by Ala215 and Lys216. Residue Ala215 participates in ATP binding. Ala215 contacts Mg(2+). Lys216 is a (2R)-3-phosphoglycerate binding site. Asp219 serves as a coordination point for CDP. Asp219 serves as a coordination point for Mg(2+). ADP contacts are provided by Lys220 and Gly238. Residue Lys220 participates in AMP binding. Lys220 lines the ATP pocket. Gly238 is a binding site for CDP. AMP contacts are provided by Ala239 and Ala311. 2 residues coordinate ATP: Ala239 and Ala311. The ADP site is built by Ala311 and Asn335. CDP is bound by residues Gly336 and Phe341. ADP contacts are provided by Phe341, Glu342, Asp374, and Thr375. Glu342 is a binding site for AMP. ATP is bound by residues Glu342, Asp374, and Thr375. Residue Asp374 coordinates Mg(2+).

This sequence belongs to the phosphoglycerate kinase family. As to quaternary structure, monomer. The cofactor is Mg(2+).

Its subcellular location is the glycosome. The catalysed reaction is (2R)-3-phosphoglycerate + ATP = (2R)-3-phospho-glyceroyl phosphate + ADP. The protein operates within carbohydrate degradation; glycolysis; pyruvate from D-glyceraldehyde 3-phosphate: step 2/5. The polypeptide is Phosphoglycerate kinase, glycosomal (PGKC) (Leishmania mexicana).